The following is a 765-amino-acid chain: MVERAGWCRKKSPGFVEYGLMVLLLLLLGAIVTLGVFYSIGKQLPLLTSLLHFSWDERTVVKRALRDSSLKSDICTTPSCVIAAARILENMDQSRNPCENFYQYACGGWLRHHVIPETNSRYSVFDILRDELEVILKGVLEDSTSQHRPAVEKAKTLYRSCMNQSVIEKRDSEPLLSVLKMVGGWPVAMDKWNETMGLKWELERQLAVLNSQFNRRVLIDLFIWNDDQNSSRHVIYIDQPTLGMPSREYYFQEDNNHKVRKAYLEFMTSVATMLRKDQNLSKESAMVREEMAEVLELETHLANATVPQEKRHDVTALYHRMDLMELQERFGLKGFNWTLFIQNVLSSVEVELFPDEEVVVYGIPYLENLEDIIDSYSARTMQNYLVWRLVLDRIGSLSQRFKEARVDYRKALYGTTVEEVRWRECVSYVNSNMESAVGSLYIKRAFSKDSKSTVRELIEKIRSVFVDNLDELNWMDEESKKKAQEKAMNIREQIGYPDYILEDNNKHLDEEYSSLTFYEDLYFENGLQNLKNNAQRSLKKLREKVDQNLWIIGAAVVNAFYSPNRNQIVFPAGILQPPFFSKDQPQSLNFGGIGMVIGHEITHGFDDNGRNFDKNGNMLDWWSNFSARHFQQQSQCMIYQYGNFSWELADNQNVNGFSTLGENIADNGGVRQAYKAYLRWLADGGKDQRLPGLNLTYAQLFFINYAQVWCGSYRPEFAVQSIKTDVHSPLKYRVLGSLQNLPGFSEAFHCPRGSPMHPMKRCRIW.

Over 1–19 (MVERAGWCRKKSPGFVEYG) the chain is Cytoplasmic. A helical; Signal-anchor for type II membrane protein transmembrane segment spans residues 20–40 (LMVLLLLLLGAIVTLGVFYSI). At 41-765 (GKQLPLLTSL…MHPMKRCRIW (725 aa)) the chain is on the lumenal side. The 692-residue stretch at 74–765 (ICTTPSCVIA…MHPMKRCRIW (692 aa)) folds into the Peptidase M13 domain. Intrachain disulfides connect Cys-75/Cys-80, Cys-98/Cys-750, Cys-106/Cys-710, Cys-161/Cys-425, and Cys-636/Cys-762. Arg-121 provides a ligand contact to a peptide. Residues Asn-163, Asn-279, Asn-303, and Asn-336 are each glycosylated (N-linked (GlcNAc...) asparagine). Residues 523–549 (FENGLQNLKNNAQRSLKKLREKVDQNL) adopt a coiled-coil conformation. Position 599 (His-599) interacts with Zn(2+). The active site involves Glu-600. 2 residues coordinate Zn(2+): His-603 and Glu-662. The Proton donor role is filled by Asp-666. N-linked (GlcNAc...) asparagine glycosylation is present at Asn-694.

Belongs to the peptidase M13 family. Zn(2+) is required as a cofactor. Post-translationally, N-glycosylated. As to expression, highly expressed in testis. Also expressed in ovary. Weakly or not expressed in brain, lung, heart, liver, kidney, adrenal gland and intestine.

The protein localises to the membrane. Its subcellular location is the secreted. The catalysed reaction is Preferential cleavage of polypeptides between hydrophobic residues, particularly with Phe or Tyr at P1'.. With respect to regulation, inhibited by thiorphan and phosphoramidon. Its function is as follows. Metalloprotease involved in sperm function, possibly by modulating the processes of fertilization and early embryonic development. Degrades a broad variety of small peptides with a preference for peptides shorter than 3 kDa containing neutral bulky aliphatic or aromatic amino acid residues. Shares the same substrate specificity with MME and cleaves peptides at the same amide bond. The chain is Membrane metallo-endopeptidase-like 1 (Mmel1) from Mus musculus (Mouse).